We begin with the raw amino-acid sequence, 215 residues long: Cytochrome b6 (215 aa).

Residues 32-52 (IFYCLGGITLTCFLVQVATGF) traverse the membrane as a helical segment. Cys-35 is a binding site for heme c. Heme b-binding residues include His-86 and His-100. 3 helical membrane-spanning segments follow: residues 90–110 (ASMM…TGGF), 116–136 (LTWV…VTGY), and 186–206 (LHTF…FPMI). Heme b is bound by residues His-187 and His-202.

This sequence belongs to the cytochrome b family. PetB subfamily. The 4 large subunits of the cytochrome b6-f complex are cytochrome b6, subunit IV (17 kDa polypeptide, PetD), cytochrome f and the Rieske protein, while the 4 small subunits are PetG, PetL, PetM and PetN. The complex functions as a dimer. Heme b is required as a cofactor. It depends on heme c as a cofactor.

It localises to the plastid. It is found in the chloroplast thylakoid membrane. Its function is as follows. Component of the cytochrome b6-f complex, which mediates electron transfer between photosystem II (PSII) and photosystem I (PSI), cyclic electron flow around PSI, and state transitions. In Vitis vinifera (Grape), this protein is Cytochrome b6.